Consider the following 481-residue polypeptide: Dihydrolipoyl dehydrogenase (481 aa).

FAD is bound by residues 34–42 and K51; that span reads EREHMGGIC. A disulfide bridge links C42 with C47. NAD(+)-binding positions include 195–199, E218, and 284–287; these read GSGAI and AVGV. Positions 326 and 334 each coordinate FAD. The Proton acceptor role is filled by H460.

This sequence belongs to the class-I pyridine nucleotide-disulfide oxidoreductase family. As to quaternary structure, homodimer. The cofactor is FAD.

It localises to the cytoplasm. It carries out the reaction N(6)-[(R)-dihydrolipoyl]-L-lysyl-[protein] + NAD(+) = N(6)-[(R)-lipoyl]-L-lysyl-[protein] + NADH + H(+). Its function is as follows. Lipoamide dehydrogenase is a component of the alpha-ketoacid dehydrogenase complexes. In Rhizobium etli (strain ATCC 51251 / DSM 11541 / JCM 21823 / NBRC 15573 / CFN 42), this protein is Dihydrolipoyl dehydrogenase (lpdA).